Consider the following 585-residue polypeptide: Voltage-gated potassium channel KCNC1 (585 aa).

Residues 1–190 (MGQGDESERI…EDPYSSRYAR (190 aa)) are Cytoplasmic-facing. Ser-44 bears the Phosphoserine mark. Zn(2+) is bound by residues His-77, Cys-83, Cys-104, and Cys-105. The interval 121 to 147 (SFGGAPLDNSADDADADGPGDSGDGED) is disordered. 4 positions are modified to phosphoserine: Ser-130, Ser-142, Ser-158, and Ser-160. The span at 130 to 147 (SADDADADGPGDSGDGED) shows a compositional bias: acidic residues. Residues 191–209 (YVAFASLFFILVSITTFCL) traverse the membrane as a helical segment. Residues Asn-220 and Asn-229 are each glycosylated (N-linked (GlcNAc...) asparagine). A helical membrane pass occupies residues 248-267 (IEGVCVVWFTFEFLMRVVFC). At 268-276 (PNKVEFIKN) the chain is on the cytoplasmic side. Residues 277–295 (SLNIIDFVAILPFYLEVGL) form a helical membrane-spanning segment. A helical; Voltage-sensor membrane pass occupies residues 309-331 (FLRVVRFVRILRIFKLTRHFVGL). Residues 332-344 (RVLGHTLRASTNE) lie on the Cytoplasmic side of the membrane. Residues 345-366 (FLLLIIFLALGVLIFATMIYYA) form a helical membrane-spanning segment. Residues Thr-400, Leu-401, Gly-402, and Tyr-403 each coordinate K(+). The short motif at 400-405 (TLGYGD) is the Selectivity filter element. Residues 415–436 (LVGALCALAGVLTIAMPVPVIV) traverse the membrane as a helical segment. The Cytoplasmic portion of the chain corresponds to 437–585 (NNFGMYYSLA…YMPTEAVRVT (149 aa)). The residue at position 474 (Ser-474) is a Phosphoserine. Position 483 is a phosphothreonine (Thr-483).

Belongs to the potassium channel family. C (Shaw) (TC 1.A.1.2) subfamily. Kv3.1/KCNC1 sub-subfamily. As to quaternary structure, homotetramer. Homomultimer. Heteromultimer with KCNG3, KCNG4 and KCNV2. Heteromultimer with KCNC2. Heterotetramer with KCNC3. Interacts with the ancillary subunits KCNE1 and KCNE2; the interaction modulates channel activity. N-glycosylated; contains sialylated glycans. In terms of tissue distribution, expressed in brain. Expressed in globus pallidal neurons of the basal ganglia (at protein level). Detected on Purkinje cells in the cerebellum molecular layer (at protein level).

It localises to the cell membrane. It is found in the cell projection. The protein resides in the axon. The protein localises to the presynaptic cell membrane. The catalysed reaction is K(+)(in) = K(+)(out). In terms of biological role, voltage-gated potassium channel that opens in response to the voltage difference across the membrane and through which potassium ions pass in accordance with their electrochemical gradient. The mechanism is time-dependent and inactivation is slow. Plays an important role in the rapid repolarization of fast-firing brain neurons. Can form functional homotetrameric channels and heterotetrameric channels that contain variable proportions of KCNC2, and possibly other family members as well. Contributes to fire sustained trains of very brief action potentials at high frequency in pallidal neurons. In Rattus norvegicus (Rat), this protein is Voltage-gated potassium channel KCNC1.